We begin with the raw amino-acid sequence, 873 residues long: V-type proton ATPase 116 kDa subunit a 2 (873 aa).

The Cytoplasmic portion of the chain corresponds to 1–407 (MGSLSRSEEM…TIITFPFLFS (407 aa)). The chain crosses the membrane as a helical span at residues 408–428 (CMFGDLGHGCIMLMAGLWFVL). Over 429–445 (REKNLQARNIKDEIFNM) the chain is Lumenal. Residues 446–466 (FFGGRYIILLMGLFSIHAGII) traverse the membrane as a helical segment. Topologically, residues 467–543 (YNDMFAKSFN…NKLNFLNSMK (77 aa)) are cytoplasmic. The helical transmembrane segment at 544-564 (MKLSVILGISQMTFGVILSFF) threads the bilayer. N565 and N569 each carry an N-linked (GlcNAc...) asparagine glycan. At 565-574 (NHTYNKSKID) the chain is on the lumenal side. Residues 575 to 595 (IFTVFIPQMLFMGCIFMYLCL) form a helical membrane-spanning segment. Topologically, residues 596–614 (QIILKWLFFWTKEATVFGQ) are cytoplasmic. A helical membrane pass occupies residues 615–635 (IYPGSHCAPSLLIGLINMFMM). Residues 636–668 (KDRNAGFVVDGGKVNGEYREVETCYLSQWYPGQ) lie on the Lumenal side of the membrane. The chain crosses the membrane as a helical span at residues 669–689 (SVIEMILVVIAVICVPVMLFG). Residues 690 to 785 (KPIHHVMQQK…LWALSLAHAQ (96 aa)) are Cytoplasmic-facing. A helical membrane pass occupies residues 786–806 (LSEVLWHMVFVTGGLGISGTA). A topological domain (lumenal) is located at residue G807. The helical transmembrane segment at 808-828 (FIAVYVVFFIFFVLTISILVL) threads the bilayer. At 829-873 (MEGLSAFLHTLRLHWVEFQSKFYLGLGYPFVPYSFKTALQEAEAA) the chain is on the cytoplasmic side.

Belongs to the V-ATPase 116 kDa subunit family. V-ATPase is a heteromultimeric enzyme made up of two complexes: the ATP-hydrolytic V1 complex and the proton translocation V0 complex. The V1 complex consists of three catalytic AB heterodimers that form a heterohexamer, three peripheral stalks each consisting of EG heterodimers, one central rotor including subunits D and F, and the regulatory subunits C and H. The proton translocation complex V0 consists of the proton transport subunit a, a ring of proteolipid subunits c9c'', rotary subunit d, subunits e and f, and the accessory subunits vah-19/Ac45 and vah-20/PRR. Interacts with V-type proton ATPase subunit C vha-11. In terms of tissue distribution, expressed in the H-shaped excretory cell (at protein level). Expressed in hypodermal cells around the vulva. Expressed in the main epidermal syncytium. Expressed in the sheath cells associated with head and tail sensory organs; specifically, expressed in the apical sheath cells of the amphids and CEP neuron and in the sheath cells of the OLQ sensory organ.

The protein resides in the apical cell membrane. Its subcellular location is the endosome. The protein localises to the multivesicular body membrane. Its function is as follows. Subunit of the V0 complex of vacuolar(H+)-ATPase (V-ATPase), a multisubunit enzyme composed of a peripheral complex (V1) that hydrolyzes ATP and a membrane integral complex (V0) that translocates protons. V-ATPase is responsible for acidifying and maintaining the pH of intracellular compartments and in some cell types, is targeted to the plasma membrane, where it is responsible for acidifying the extracellular environment. Involved in the assembly of the V-ATPase complex. The V-ATPase is required for the function of the excretory canal. Independently of the V1 complex, the V0 complex of the V-ATPase is required for multivesicular body membrane fusion with the apical membrane of the epidermal cells during exosome release and thus regulates the release of cuticle components such as Hedgehog-related peptide wrt-2 but not collagen. Also, in the epidermis, regulates the trafficking of che-14 and rdy-2. Regulates the secretion of granular material found in the amphid channel and in controlling osmoregulation in the amphid pocket. This chain is V-type proton ATPase 116 kDa subunit a 2, found in Caenorhabditis elegans.